Here is a 2710-residue protein sequence, read N- to C-terminus: Serine/threonine-protein kinase ATR (2710 aa).

The FAT domain maps to 1647–2257 (TLAKASFRCQ…LWMMAAVSKS (611 aa)). In terms of domain architecture, PI3K/PI4K catalytic spans 2368–2680 (IADDAEILNS…GVNAAPSLPL (313 aa)). The G-loop stretch occupies residues 2374–2380 (ILNSLQK). The interval 2545–2553 (GLGDRHGEN) is catalytic loop. Residues 2565–2589 (HVDFSCLFDKGLLLEKPEVVPFRFT) are activation loop. Residues 2678–2710 (LPLSVEGQARRLIAEAVSHSNLGKMYVWWMAWF) form the FATC domain.

The protein belongs to the PI3/PI4-kinase family. ATM subfamily.

The protein resides in the nucleus. It catalyses the reaction L-seryl-[protein] + ATP = O-phospho-L-seryl-[protein] + ADP + H(+). The catalysed reaction is L-threonyl-[protein] + ATP = O-phospho-L-threonyl-[protein] + ADP + H(+). Its function is as follows. Probable serine/threonine kinase. Seems to play a central role in cell-cycle regulation by transmitting DNA damage signals to downstream effectors of cell-cycle progression. May recognize the substrate consensus sequence [ST]-Q and phosphorylate histone variant H2AX to form H2AXS139ph at sites of DNA damage, thereby regulating DNA damage response mechanism. The chain is Serine/threonine-protein kinase ATR from Oryza sativa subsp. japonica (Rice).